The sequence spans 184 residues: Myeloproliferative leukemia protein (184 aa).

Residues 26 to 30 (WSAWS) carry the WSXWS motif motif. The helical transmembrane segment at 44-64 (ITLVTALLLVLSLSALLGLLL) threads the bilayer. The short motif at 80–88 (LWPSLPDLH) is the Box 1 motif element.

Belongs to the type I cytokine receptor family. Type 1 subfamily.

Its subcellular location is the membrane. Truncated form of the receptor for thrombopoietin. This Mus musculus (Mouse) protein is Myeloproliferative leukemia protein (V-MPL).